The chain runs to 322 residues: Phosphatidylserine decarboxylase proenzyme (322 aa).

Active-site charge relay system; for autoendoproteolytic cleavage activity residues include Asp90, His147, and Ser254. The active-site Schiff-base intermediate with substrate; via pyruvic acid; for decarboxylase activity is the Ser254. Residue Ser254 is modified to Pyruvic acid (Ser); by autocatalysis.

This sequence belongs to the phosphatidylserine decarboxylase family. PSD-B subfamily. Prokaryotic type I sub-subfamily. Heterodimer of a large membrane-associated beta subunit and a small pyruvoyl-containing alpha subunit. Requires pyruvate as cofactor. Is synthesized initially as an inactive proenzyme. Formation of the active enzyme involves a self-maturation process in which the active site pyruvoyl group is generated from an internal serine residue via an autocatalytic post-translational modification. Two non-identical subunits are generated from the proenzyme in this reaction, and the pyruvate is formed at the N-terminus of the alpha chain, which is derived from the carboxyl end of the proenzyme. The autoendoproteolytic cleavage occurs by a canonical serine protease mechanism, in which the side chain hydroxyl group of the serine supplies its oxygen atom to form the C-terminus of the beta chain, while the remainder of the serine residue undergoes an oxidative deamination to produce ammonia and the pyruvoyl prosthetic group on the alpha chain. During this reaction, the Ser that is part of the protease active site of the proenzyme becomes the pyruvoyl prosthetic group, which constitutes an essential element of the active site of the mature decarboxylase.

It localises to the cell membrane. It carries out the reaction a 1,2-diacyl-sn-glycero-3-phospho-L-serine + H(+) = a 1,2-diacyl-sn-glycero-3-phosphoethanolamine + CO2. It participates in phospholipid metabolism; phosphatidylethanolamine biosynthesis; phosphatidylethanolamine from CDP-diacylglycerol: step 2/2. Its function is as follows. Catalyzes the formation of phosphatidylethanolamine (PtdEtn) from phosphatidylserine (PtdSer). This chain is Phosphatidylserine decarboxylase proenzyme, found in Shigella dysenteriae serotype 1 (strain Sd197).